A 343-amino-acid polypeptide reads, in one-letter code: Phosphoribosylformylglycinamidine cyclo-ligase (343 aa).

This sequence belongs to the AIR synthase family.

The protein resides in the cytoplasm. The enzyme catalyses 2-formamido-N(1)-(5-O-phospho-beta-D-ribosyl)acetamidine + ATP = 5-amino-1-(5-phospho-beta-D-ribosyl)imidazole + ADP + phosphate + H(+). It functions in the pathway purine metabolism; IMP biosynthesis via de novo pathway; 5-amino-1-(5-phospho-D-ribosyl)imidazole from N(2)-formyl-N(1)-(5-phospho-D-ribosyl)glycinamide: step 2/2. This chain is Phosphoribosylformylglycinamidine cyclo-ligase, found in Staphylococcus epidermidis (strain ATCC 35984 / DSM 28319 / BCRC 17069 / CCUG 31568 / BM 3577 / RP62A).